The sequence spans 340 residues: MFDRYLKSVVEGDYLNSEEAYLTARMLLHEDIPEIKAAAFLSALRTRKESQEELTGFVQALYEEAKMVDCGMEVLDTCGTGGDGLGTFNISTASALVVASCGVAVAKHGNRAVTGKVGSADVLEALGVEVQLEPDEARQLLDKAGITFLFAPHYHPILKQVGGLRRGLGIATIFNFMGPLLNPCRPSYQVLGISDSNLQEAVAGTLQRLGRKRALVVHAFNGMDEISPEGKTRVFDVGEHGLEVFDIDPEELGIGGFSLDAIQGGDATASARLVIKVLQGEPGPYRDTVILNTAAALLTAGRAKNIQEGMQMAAEAIDAGKSMETLQKMISFSRDRILAC.

5-phospho-alpha-D-ribose 1-diphosphate-binding positions include glycine 79, 82–83, threonine 87, 89–92, 107–115, and serine 119; these read GD, NIST, and KHGNRAVTG. Glycine 79 is a binding site for anthranilate. Serine 91 contacts Mg(2+). Asparagine 110 is an anthranilate binding site. Arginine 165 is an anthranilate binding site. 2 residues coordinate Mg(2+): aspartate 224 and glutamate 225.

This sequence belongs to the anthranilate phosphoribosyltransferase family. Homodimer. Mg(2+) is required as a cofactor.

It catalyses the reaction N-(5-phospho-beta-D-ribosyl)anthranilate + diphosphate = 5-phospho-alpha-D-ribose 1-diphosphate + anthranilate. It participates in amino-acid biosynthesis; L-tryptophan biosynthesis; L-tryptophan from chorismate: step 2/5. In terms of biological role, catalyzes the transfer of the phosphoribosyl group of 5-phosphorylribose-1-pyrophosphate (PRPP) to anthranilate to yield N-(5'-phosphoribosyl)-anthranilate (PRA). In Syntrophomonas wolfei subsp. wolfei (strain DSM 2245B / Goettingen), this protein is Anthranilate phosphoribosyltransferase.